We begin with the raw amino-acid sequence, 116 residues long: Probable transcriptional regulator WhiB6 (116 aa).

Residues cysteine 12, cysteine 53, cysteine 56, and cysteine 62 each contribute to the [4Fe-4S] cluster site. A 4Fe-4S Wbl-type domain is found at 33 to 86 (VCTQDPDRWTTTPDDEAKTLCRACPRRWLCARDAVESAGAEGLWAGVVIPESGR).

The protein belongs to the WhiB family. Requires [4Fe-4S] cluster as cofactor. In terms of processing, the Fe-S cluster can be nitrosylated by nitric oxide (NO). Upon Fe-S cluster removal intramolecular disulfide bonds are formed.

Its subcellular location is the cytoplasm. Functionally, acts as a transcriptional regulator. Probably redox-responsive. The apo- but not holo-form probably binds DNA. This chain is Probable transcriptional regulator WhiB6 (whiB6), found in Mycobacterium tuberculosis (strain CDC 1551 / Oshkosh).